Reading from the N-terminus, the 429-residue chain is D-amino acid dehydrogenase (429 aa).

An FAD-binding site is contributed by 3 to 17; sequence VLILGSGVIGVTSAW.

Belongs to the DadA oxidoreductase family. The cofactor is FAD.

It catalyses the reaction a D-alpha-amino acid + A + H2O = a 2-oxocarboxylate + AH2 + NH4(+). Oxidative deamination of D-amino acids. This is D-amino acid dehydrogenase from Xanthomonas axonopodis pv. citri (strain 306).